The sequence spans 440 residues: Thymidine phosphorylase (440 aa).

Belongs to the thymidine/pyrimidine-nucleoside phosphorylase family. In terms of assembly, homodimer.

The enzyme catalyses thymidine + phosphate = 2-deoxy-alpha-D-ribose 1-phosphate + thymine. It participates in pyrimidine metabolism; dTMP biosynthesis via salvage pathway; dTMP from thymine: step 1/2. The enzymes which catalyze the reversible phosphorolysis of pyrimidine nucleosides are involved in the degradation of these compounds and in their utilization as carbon and energy sources, or in the rescue of pyrimidine bases for nucleotide synthesis. This is Thymidine phosphorylase from Salmonella choleraesuis (strain SC-B67).